We begin with the raw amino-acid sequence, 103 residues long: Putative septation protein SpoVG (103 aa).

Belongs to the SpoVG family.

Its function is as follows. Could be involved in septation. This Exiguobacterium sibiricum (strain DSM 17290 / CCUG 55495 / CIP 109462 / JCM 13490 / 255-15) protein is Putative septation protein SpoVG.